A 273-amino-acid polypeptide reads, in one-letter code: Dermonecrotic toxin LarSicTox-alphaVII1 (273 aa).

His-5 is a catalytic residue. Residues Glu-25 and Asp-27 each contribute to the Mg(2+) site. His-41 serves as the catalytic Nucleophile. Disulfide bonds link Cys-45-Cys-51 and Cys-47-Cys-192. Mg(2+) is bound at residue Asp-85.

It belongs to the arthropod phospholipase D family. Class II subfamily. Mg(2+) serves as cofactor. As to expression, expressed by the venom gland.

The protein resides in the secreted. The enzyme catalyses an N-(acyl)-sphingosylphosphocholine = an N-(acyl)-sphingosyl-1,3-cyclic phosphate + choline. The catalysed reaction is an N-(acyl)-sphingosylphosphoethanolamine = an N-(acyl)-sphingosyl-1,3-cyclic phosphate + ethanolamine. It catalyses the reaction a 1-acyl-sn-glycero-3-phosphocholine = a 1-acyl-sn-glycero-2,3-cyclic phosphate + choline. It carries out the reaction a 1-acyl-sn-glycero-3-phosphoethanolamine = a 1-acyl-sn-glycero-2,3-cyclic phosphate + ethanolamine. In terms of biological role, dermonecrotic toxins cleave the phosphodiester linkage between the phosphate and headgroup of certain phospholipids (sphingolipid and lysolipid substrates), forming an alcohol (often choline) and a cyclic phosphate. This toxin acts on sphingomyelin (SM). It may also act on ceramide phosphoethanolamine (CPE), lysophosphatidylcholine (LPC) and lysophosphatidylethanolamine (LPE), but not on lysophosphatidylserine (LPS), and lysophosphatidylglycerol (LPG). It acts by transphosphatidylation, releasing exclusively cyclic phosphate products as second products. Induces dermonecrosis, hemolysis, increased vascular permeability, edema, inflammatory response, and platelet aggregation. In Loxosceles arizonica (Arizona brown spider), this protein is Dermonecrotic toxin LarSicTox-alphaVII1.